The primary structure comprises 466 residues: Cytochrome c-552 (466 aa).

The signal sequence occupies residues 1–27 (MVRNLTKKSFALSALVAASLMASGVMA). H87 serves as a coordination point for heme c. C115, C118, and K119 together coordinate heme. 6 residues coordinate heme c: C153, C156, H157, C195, C198, and H199. Ca(2+) is bound by residues E201, Y202, K250, and Q252. Y202 serves as a coordination point for substrate. H253 is a binding site for substrate. Heme c-binding residues include H264, C271, C274, H275, H290, C303, C306, H307, and H382.

It belongs to the cytochrome c-552 family. Requires Ca(2+) as cofactor. It depends on heme c as a cofactor.

The protein localises to the periplasm. It carries out the reaction 6 Fe(III)-[cytochrome c] + NH4(+) + 2 H2O = 6 Fe(II)-[cytochrome c] + nitrite + 8 H(+). It participates in nitrogen metabolism; nitrate reduction (assimilation). In terms of biological role, catalyzes the reduction of nitrite to ammonia, consuming six electrons in the process. The sequence is that of Cytochrome c-552 from Shewanella sediminis (strain HAW-EB3).